Consider the following 978-residue polypeptide: Peroxisomal ATPase PEX6 (978 aa).

Arg-119 bears the Omega-N-methylarginine mark. Residues 470–477 and 742–749 contribute to the ATP site; these read GPPGSGKT and GPPGTGKT.

The protein belongs to the AAA ATPase family. As to quaternary structure, interacts with PEX1; forming the PEX1-PEX6 AAA ATPase complex, which is composed of a heterohexamer formed by a trimer of PEX1-PEX6 dimers. Interacts with PEX26; interaction is direct and promotes recruitment to peroxisomal membranes. Interacts with ZFAND6.

Its subcellular location is the cytoplasm. The protein resides in the cytosol. The protein localises to the peroxisome membrane. It localises to the cell projection. It is found in the cilium. Its subcellular location is the photoreceptor outer segment. The catalysed reaction is ATP + H2O = ADP + phosphate + H(+). Its function is as follows. Component of the PEX1-PEX6 AAA ATPase complex, a protein dislocase complex that mediates the ATP-dependent extraction of the PEX5 receptor from peroxisomal membranes, an essential step for PEX5 recycling. Specifically recognizes PEX5 monoubiquitinated at 'Cys-11', and pulls it out of the peroxisome lumen through the PEX2-PEX10-PEX12 retrotranslocation channel. Extraction by the PEX1-PEX6 AAA ATPase complex is accompanied by unfolding of the TPR repeats and release of bound cargo from PEX5. This chain is Peroxisomal ATPase PEX6, found in Rattus norvegicus (Rat).